The primary structure comprises 417 residues: NADH-quinone oxidoreductase subunit D (417 aa).

The protein belongs to the complex I 49 kDa subunit family. As to quaternary structure, NDH-1 is composed of 14 different subunits. Subunits NuoB, C, D, E, F, and G constitute the peripheral sector of the complex.

Its subcellular location is the cell inner membrane. It carries out the reaction a quinone + NADH + 5 H(+)(in) = a quinol + NAD(+) + 4 H(+)(out). Functionally, NDH-1 shuttles electrons from NADH, via FMN and iron-sulfur (Fe-S) centers, to quinones in the respiratory chain. The immediate electron acceptor for the enzyme in this species is believed to be ubiquinone. Couples the redox reaction to proton translocation (for every two electrons transferred, four hydrogen ions are translocated across the cytoplasmic membrane), and thus conserves the redox energy in a proton gradient. The polypeptide is NADH-quinone oxidoreductase subunit D (Albidiferax ferrireducens (strain ATCC BAA-621 / DSM 15236 / T118) (Rhodoferax ferrireducens)).